The sequence spans 129 residues: MKTLQFFFLFCCWKAICCNSCELTNITIAIEKEECRFCISINTTWCAGHCYTRDLVYKDPARPNIQKTCTFKELVYETVRVPGCAHHADSLYTYPVATQCHCGKCDSDSTDCTVRGLGPSYCSFGEMKE.

The signal sequence occupies residues methionine 1–serine 20. 6 disulfide bridges follow: cysteine 21-cysteine 69, cysteine 35-cysteine 84, cysteine 38-cysteine 122, cysteine 46-cysteine 100, cysteine 50-cysteine 102, and cysteine 105-cysteine 112. Asparagine 25 and asparagine 42 each carry an N-linked (GlcNAc...) asparagine glycan.

The protein belongs to the glycoprotein hormones subunit beta family. Heterodimer. The active follitropin is a heterodimer composed of an alpha chain/CGA shared with other hormones and a unique beta chain/FSHB shown here.

Its subcellular location is the secreted. Its function is as follows. Together with the alpha chain CGA constitutes follitropin, the follicle-stimulating hormone, and provides its biological specificity to the hormone heterodimer. Binds FSHR, a G protein-coupled receptor, on target cells to activate downstream signaling pathways. Follitropin is involved in follicle development and spermatogenesis in reproductive organs. The sequence is that of Follitropin subunit beta (FSHB) from Pan troglodytes (Chimpanzee).